Reading from the N-terminus, the 426-residue chain is Glutamate-1-semialdehyde 2,1-aminomutase (426 aa).

Lys-265 carries the N6-(pyridoxal phosphate)lysine modification.

It belongs to the class-III pyridoxal-phosphate-dependent aminotransferase family. HemL subfamily. In terms of assembly, homodimer. It depends on pyridoxal 5'-phosphate as a cofactor.

It is found in the cytoplasm. It carries out the reaction (S)-4-amino-5-oxopentanoate = 5-aminolevulinate. It functions in the pathway porphyrin-containing compound metabolism; protoporphyrin-IX biosynthesis; 5-aminolevulinate from L-glutamyl-tRNA(Glu): step 2/2. In Salmonella enteritidis PT4 (strain P125109), this protein is Glutamate-1-semialdehyde 2,1-aminomutase.